Consider the following 184-residue polypeptide: Elongation factor P (184 aa).

It belongs to the elongation factor P family.

It is found in the cytoplasm. The protein operates within protein biosynthesis; polypeptide chain elongation. Its function is as follows. Involved in peptide bond synthesis. Stimulates efficient translation and peptide-bond synthesis on native or reconstituted 70S ribosomes in vitro. Probably functions indirectly by altering the affinity of the ribosome for aminoacyl-tRNA, thus increasing their reactivity as acceptors for peptidyl transferase. In Acidovorax ebreus (strain TPSY) (Diaphorobacter sp. (strain TPSY)), this protein is Elongation factor P.